A 1373-amino-acid polypeptide reads, in one-letter code: DNA-directed RNA polymerase subunit beta'' (1373 aa).

Cys-224, Cys-296, Cys-303, and Cys-306 together coordinate Zn(2+).

The protein belongs to the RNA polymerase beta' chain family. RpoC2 subfamily. As to quaternary structure, in plastids the minimal PEP RNA polymerase catalytic core is composed of four subunits: alpha, beta, beta', and beta''. When a (nuclear-encoded) sigma factor is associated with the core the holoenzyme is formed, which can initiate transcription. Zn(2+) serves as cofactor.

It localises to the plastid. It is found in the chloroplast. It carries out the reaction RNA(n) + a ribonucleoside 5'-triphosphate = RNA(n+1) + diphosphate. Functionally, DNA-dependent RNA polymerase catalyzes the transcription of DNA into RNA using the four ribonucleoside triphosphates as substrates. This chain is DNA-directed RNA polymerase subunit beta'', found in Amborella trichopoda.